A 565-amino-acid chain; its full sequence is MSTGKNAPVTENSRQMSLQACLDECMEALDLFLNNHFNESLDKLRPRSKESMYHALIYATVLEMQAMMTFQQDDIVHAGNTMKSAQEVCQRFRKKSGGLGSRGANDDLSEEQIHAEVCYAECLLHRAALTFLQDENMVSFIKGGIKVRNSYLIYKELHAFIQSDATFKGPNHKHLEGGVSFGIGAFNLTLSLFPARILKLLEFAGFSGDKEFGISQLYTGATSHTLRSMLCALLLLCFYTFLSFILGTGEGEVEEAERLLKPFRLRYPRGAIFLFFAGRAEEIKGNIDEAVALFEDGCKAQQVWKQFHHMCYWELMWCFTFKRYWKMAYFYADLLSQESRWSKAMYVYMKAAYLSMLPDSESRPFGDNEVDLFRQVPTYKQKIAGKSPPTEKFAIRKARRYKASNPVRLPVPVLEMMYMWNGFSMISKQPELTEGMMETLLEAERTLRASPDNEYTVDDTCLIQLLKGLCLKNQGQMQAAEDCFNQVYISEKKLKFDHYLVPNALLEMSLLFIDTGRKEQAIKLLQKAKNNYKVYSMESRTQFRVHAALTKLKADVSDQEEITAL.

TPR repeat units follow at residues 271–304 (AIFL…QQVW), 461–494 (CLIQ…EKKL), and 502–535 (PNAL…YKVY).

The protein belongs to the TTC39 family.

This is Tetratricopeptide repeat protein 39A (ttc39a) from Danio rerio (Zebrafish).